The sequence spans 396 residues: Anhydro-N-acetylmuramic acid kinase (396 aa).

19–26 (GTSADGID) lines the ATP pocket.

This sequence belongs to the anhydro-N-acetylmuramic acid kinase family.

It carries out the reaction 1,6-anhydro-N-acetyl-beta-muramate + ATP + H2O = N-acetyl-D-muramate 6-phosphate + ADP + H(+). It participates in amino-sugar metabolism; 1,6-anhydro-N-acetylmuramate degradation. The protein operates within cell wall biogenesis; peptidoglycan recycling. In terms of biological role, catalyzes the specific phosphorylation of 1,6-anhydro-N-acetylmuramic acid (anhMurNAc) with the simultaneous cleavage of the 1,6-anhydro ring, generating MurNAc-6-P. Is required for the utilization of anhMurNAc either imported from the medium or derived from its own cell wall murein, and thus plays a role in cell wall recycling. In Colwellia psychrerythraea (strain 34H / ATCC BAA-681) (Vibrio psychroerythus), this protein is Anhydro-N-acetylmuramic acid kinase.